We begin with the raw amino-acid sequence, 387 residues long: 3-ketoacyl-CoA thiolase (387 aa).

Catalysis depends on Cys91, which acts as the Acyl-thioester intermediate. Active-site proton acceptor residues include His343 and Cys373.

It belongs to the thiolase-like superfamily. Thiolase family. In terms of assembly, heterotetramer of two alpha chains (FadB) and two beta chains (FadA).

It is found in the cytoplasm. It carries out the reaction an acyl-CoA + acetyl-CoA = a 3-oxoacyl-CoA + CoA. Its pathway is lipid metabolism; fatty acid beta-oxidation. Its function is as follows. Catalyzes the final step of fatty acid oxidation in which acetyl-CoA is released and the CoA ester of a fatty acid two carbons shorter is formed. This is 3-ketoacyl-CoA thiolase from Vibrio vulnificus (strain YJ016).